The sequence spans 391 residues: tRNA-specific 2-thiouridylase MnmA (391 aa).

Residues 9-16 (GMSGGVDS) and methionine 35 contribute to the ATP site. The segment at 95–97 (NPD) is interaction with target base in tRNA. Cysteine 100 acts as the Nucleophile in catalysis. Cysteine 100 and cysteine 196 are disulfide-bonded. Residue glycine 124 coordinates ATP. The interaction with tRNA stretch occupies residues 146-148 (KDQ). Residue cysteine 196 is the Cysteine persulfide intermediate of the active site. Residues 308-309 (RY) form an interaction with tRNA region.

This sequence belongs to the MnmA/TRMU family.

It localises to the cytoplasm. It catalyses the reaction S-sulfanyl-L-cysteinyl-[protein] + uridine(34) in tRNA + AH2 + ATP = 2-thiouridine(34) in tRNA + L-cysteinyl-[protein] + A + AMP + diphosphate + H(+). Functionally, catalyzes the 2-thiolation of uridine at the wobble position (U34) of tRNA, leading to the formation of s(2)U34. This chain is tRNA-specific 2-thiouridylase MnmA, found in Burkholderia orbicola (strain MC0-3).